A 209-amino-acid chain; its full sequence is Outer-membrane lipoprotein carrier protein (209 aa).

Residues 1-22 (MKKLLLTLAMVPAVLFSPTAWG) form the signal peptide.

The protein belongs to the LolA family. As to quaternary structure, monomer.

Its subcellular location is the periplasm. Its function is as follows. Participates in the translocation of lipoproteins from the inner membrane to the outer membrane. Only forms a complex with a lipoprotein if the residue after the N-terminal Cys is not an aspartate (The Asp acts as a targeting signal to indicate that the lipoprotein should stay in the inner membrane). This chain is Outer-membrane lipoprotein carrier protein, found in Alcanivorax borkumensis (strain ATCC 700651 / DSM 11573 / NCIMB 13689 / SK2).